Reading from the N-terminus, the 305-residue chain is Recombination-associated protein RdgC (305 aa).

The protein belongs to the RdgC family.

Its subcellular location is the cytoplasm. It is found in the nucleoid. Functionally, may be involved in recombination. This chain is Recombination-associated protein RdgC, found in Sodalis glossinidius (strain morsitans).